The following is a 2824-amino-acid chain: Highly reducing polyketide synthase stpks1 (2824 aa).

In terms of domain architecture, Ketosynthase family 3 (KS3) spans 8–428 (PKPVAVVGIS…GANGHVIAES (421 aa)). Catalysis depends on for beta-ketoacyl synthase activity residues Cys177, His312, and His348. The interval 517-854 (QLVFVFSGQG…LTAVGNLSTL (338 aa)) is malonyl-CoA:ACP transacylase (MAT) domain. Ser616 (for malonyltransferase activity) is an active-site residue. The tract at residues 886–1004 (MPFYSESSEL…GFMTTEVMDK (119 aa)) is N-terminal hotdog fold. The region spanning 886–1168 (MPFYSESSEL…SKHWTGAVPT (283 aa)) is the PKS/mFAS DH domain. Residues 894-1083 (ELAVKMKRSR…PSLLDSCIHG (190 aa)) form a dehydratase (DH) domain region. Residue His925 is the Proton acceptor; for dehydratase activity of the active site. The segment at 1018 to 1168 (TTPADISNLY…SKHWTGAVPT (151 aa)) is C-terminal hotdog fold. Residue Asp1078 is the Proton donor; for dehydratase activity of the active site. A methyltransferase (CMet) domain region spans residues 1101-1449 (PSHIGRVTLY…KFQVVDGAQD (349 aa)). The disordered stretch occupies residues 1213-1232 (APPSANGHANGHANGSANGS). The tract at residues 1518 to 1840 (TGTFDGAVAT…LPSDFSVSQS (323 aa)) is enoyl reductase (ER) domain. The interval 1842 to 2096 (ALADDKTYLV…SESVLYNHLV (255 aa)) is ketoreductase (KR) domain. The region spanning 2109–2196 (DPYEVLQEIV…TAVSTAEKPF (88 aa)) is the Carrier domain. Residues 2200–2414 (AMHQPGQTIL…WASSDATTRM (215 aa)) form a thioesterase (TE) domain region. A methyltransferase (CMet) domain region spans residues 2608–2809 (YRQNKVFTSM…ATGYSNVQVC (202 aa)).

It participates in mycotoxin biosynthesis. Highly reducing polyketide synthase; part of the gene cluster that mediates the biosynthesis of strobilurin A, an antifungal polyketide that contains a key beta-methoxyacrylate toxophore that targets the complex III of the mitochondrial electron transport chain. Strobilurin biosynthesis begins with construction of benzoyl CoA by step-wise elimination of ammonia from phenylalanine by the phenylalanine ammonia-lyase str11, oxygenation by str8 and retro-Claisen reaction to form benzoic acid, which is activated to its CoA thiolester benzoyl CoA by the dedicated CoA ligase str10. Benzoyl CoA forms the starter unit for the highly reducing polyketide synthase stpks1 that produces the polyketide prestrobilutin A. The FAD-dependent oxygenase str9 then catalyzes the key oxidative rearrangement responsible for the creation of the beta-methoxyacrylate toxophore. Str9 performs epoxidation of the 2,3 olefin of prestrobilutin A, followed by Meinwald rearrangement to furnish the aldehyde intermediate. Rapid enolization of the aldehyde intermediate would give the beta-methoxyacrylate skeleton and methylations catalyzed by str2 and str3 complete the synthesis and lead to the production of strobilurin A. The short-chain dehydrogenase stl2 and the dehydrogenase str4 play a role in the shunt pathway leading to the production of bolineol. The cluster encodes no obvious halogenase gene that could be involved in production of strobilurin B, nor any obvious dimethylallyl-transferase that could be involved in the production of strobilurin G. It is possible that unknown proteins encoded in, or near, the cluster (such as str1 or stl1) may form new classes of halogenases or dimethylally-transferases, or that the responsible genes are located elsewhere on the genome. Similarly, proteins encoded by str5/str6 hydrolases appear to have no chemical role in the biosynthesis of strobilurin A. Finally, no obvious self-resistance gene is found within the cluster. The protein is Highly reducing polyketide synthase stpks1 of Strobilurus tenacellus.